The following is a 200-amino-acid chain: Recombination protein RecR (200 aa).

A C4-type zinc finger spans residues Cys60 to Cys75. A Toprim domain is found at Thr83–Pro177.

It belongs to the RecR family.

Its function is as follows. May play a role in DNA repair. It seems to be involved in an RecBC-independent recombinational process of DNA repair. It may act with RecF and RecO. The protein is Recombination protein RecR of Francisella tularensis subsp. tularensis (strain SCHU S4 / Schu 4).